A 251-amino-acid chain; its full sequence is NADPH-dependent oxidoreductase (251 aa).

It belongs to the flavin oxidoreductase frp family. It depends on FMN as a cofactor.

Its function is as follows. Reduces FMN, organic nitro compounds and disulfide DTNB. Involved in maintenance of the cellular redox state and the disulfide stress response. The protein is NADPH-dependent oxidoreductase (nfrA) of Staphylococcus aureus (strain MSSA476).